Consider the following 97-residue polypeptide: Protein CYSTEINE-RICH TRANSMEMBRANE MODULE 7 (97 aa).

Residues 1–27 (MASYHVSHDSYQSPGPSPLYQPIIEAP) form a disordered region. Over residues 15-27 (GPSPLYQPIIEAP) the composition is skewed to pro residues. The helical transmembrane segment at 68 to 88 (YVGCFPFLRSCLTTLCCCWFV) threads the bilayer.

It belongs to the CYSTM1 family. Homodimer and heterodimers. Interacts with CYSTM3, CYSTM4, CYSTM5, CYSTM6, CYSTM10, WIH1/CYSTM13 and CYSTM11. Binds weakly to CYSTM1, CYSTM2 and CYSTM12. In terms of tissue distribution, mostly expressed in siliques and, to a lower extent, in stems, roots, leaves and flowers.

Its subcellular location is the cell membrane. Functionally, involved in resistance to abiotic stress. The protein is Protein CYSTEINE-RICH TRANSMEMBRANE MODULE 7 of Arabidopsis thaliana (Mouse-ear cress).